A 430-amino-acid chain; its full sequence is Histidine--tRNA ligase (430 aa).

Belongs to the class-II aminoacyl-tRNA synthetase family. As to quaternary structure, homodimer.

It localises to the cytoplasm. It carries out the reaction tRNA(His) + L-histidine + ATP = L-histidyl-tRNA(His) + AMP + diphosphate + H(+). In Chlamydia pneumoniae (Chlamydophila pneumoniae), this protein is Histidine--tRNA ligase (hisS).